A 243-amino-acid polypeptide reads, in one-letter code: 1-(5-phosphoribosyl)-5-[(5-phosphoribosylamino)methylideneamino] imidazole-4-carboxamide isomerase (243 aa).

Catalysis depends on D8, which acts as the Proton acceptor. Residue D130 is the Proton donor of the active site.

The protein belongs to the HisA/HisF family.

The protein resides in the cytoplasm. It carries out the reaction 1-(5-phospho-beta-D-ribosyl)-5-[(5-phospho-beta-D-ribosylamino)methylideneamino]imidazole-4-carboxamide = 5-[(5-phospho-1-deoxy-D-ribulos-1-ylimino)methylamino]-1-(5-phospho-beta-D-ribosyl)imidazole-4-carboxamide. Its pathway is amino-acid biosynthesis; L-histidine biosynthesis; L-histidine from 5-phospho-alpha-D-ribose 1-diphosphate: step 4/9. The sequence is that of 1-(5-phosphoribosyl)-5-[(5-phosphoribosylamino)methylideneamino] imidazole-4-carboxamide isomerase from Cellvibrio japonicus (strain Ueda107) (Pseudomonas fluorescens subsp. cellulosa).